Consider the following 529-residue polypeptide: Bifunctional purine biosynthesis protein PurH (529 aa).

The region spanning 1-148 (MQQRRSVRRA…KNHKDVAIVV (148 aa)) is the MGS-like domain.

Belongs to the PurH family.

It catalyses the reaction (6R)-10-formyltetrahydrofolate + 5-amino-1-(5-phospho-beta-D-ribosyl)imidazole-4-carboxamide = 5-formamido-1-(5-phospho-D-ribosyl)imidazole-4-carboxamide + (6S)-5,6,7,8-tetrahydrofolate. The enzyme catalyses IMP + H2O = 5-formamido-1-(5-phospho-D-ribosyl)imidazole-4-carboxamide. It participates in purine metabolism; IMP biosynthesis via de novo pathway; 5-formamido-1-(5-phospho-D-ribosyl)imidazole-4-carboxamide from 5-amino-1-(5-phospho-D-ribosyl)imidazole-4-carboxamide (10-formyl THF route): step 1/1. It functions in the pathway purine metabolism; IMP biosynthesis via de novo pathway; IMP from 5-formamido-1-(5-phospho-D-ribosyl)imidazole-4-carboxamide: step 1/1. The polypeptide is Bifunctional purine biosynthesis protein PurH (Salmonella arizonae (strain ATCC BAA-731 / CDC346-86 / RSK2980)).